The chain runs to 268 residues: Interleukin-1 alpha (268 aa).

Residues 1 to 112 (MAKVPDLFED…NTEEEIIKPR (112 aa)) constitute a propeptide that is removed on maturation. Position 82 is an N6-acetyllysine (Lys82). The nuclear localization signal (NLS) stretch occupies residues 82-86 (KKRRL). Ser87 is subject to Phosphoserine. N-linked (GlcNAc...) asparagine glycosylation is found at Asn102 and Asn141.

Belongs to the IL-1 family. Monomer. Interacts with TMED10; the interaction mediates the translocation from the cytoplasm into the ERGIC (endoplasmic reticulum-Golgi intermediate compartment) and thereby secretion. Interacts with IL1R1. Interacts with S100A13; this interaction is the first step in the export of IL1A, followed by direct translocation of this complex across the plasma membrane. Acetylated within its nuclear localization sequence, which impacts subcellular localization. In terms of processing, proteolytic processed by CAPN1 in a calcium-dependent manner. Cleavage from 31 kDa precursor to 18 kDa biologically active molecules. Post-translationally, phosphorylated. Phosphorylation greatly enhances susceptibility to digestion and promotes the conversion of pre-IL1A alpha to the biologically active IL1A.

Its subcellular location is the nucleus. The protein resides in the cytoplasm. It localises to the secreted. Its function is as follows. Cytokine constitutively present intracellularly in nearly all resting non-hematopoietic cells that plays an important role in inflammation and bridges the innate and adaptive immune systems. After binding to its receptor IL1R1 together with its accessory protein IL1RAP, forms the high affinity interleukin-1 receptor complex. Signaling involves the recruitment of adapter molecules such as MYD88, IRAK1 or IRAK4. In turn, mediates the activation of NF-kappa-B and the three MAPK pathways p38, p42/p44 and JNK pathways. Within the cell, acts as an alarmin and cell death results in its liberation in the extracellular space after disruption of the cell membrane to induce inflammation and alert the host to injury or damage. In addition to its role as a danger signal, which occurs when the cytokine is passively released by cell necrosis, directly senses DNA damage and acts as signal for genotoxic stress without loss of cell integrity. In Bubalus carabanensis (Swamp type water buffalo), this protein is Interleukin-1 alpha (IL1A).